We begin with the raw amino-acid sequence, 227 residues long: LysM and putative peptidoglycan-binding domain-containing protein 1 (227 aa).

Positions 1–11 (MASPSRQPPPG) are enriched in pro residues. A disordered region spans residues 1 to 22 (MASPSRQPPPGGSGLLQGSRAR). Ser23 and Ser33 each carry phosphoserine. The LysM domain occupies 40 to 84 (LEHQLEPGDTLAGLALKYGVTMEQIKRANRLYTNDSIFLKKTLYI). Residues 97 to 150 (LDSEEEKDGEEKVHPSNSEVWPHSTERKKQETGAGRANGEVLPTPGQETPTPIH) form a disordered region. Ser99, Ser166, Ser194, and Ser212 each carry phosphoserine.

This is LysM and putative peptidoglycan-binding domain-containing protein 1 (LYSMD1) from Homo sapiens (Human).